The sequence spans 333 residues: cGAMP-activated phospholipase (333 aa).

In terms of domain architecture, PNPLA spans 10 to 191; the sequence is LALSGGGYRG…VGNAPGLFGL (182 aa). The GXGXXG motif lies at 14 to 19; sequence GGGYRG. A GXSXG motif is present at residues 46–50; that stretch reads GTSAG. The Nucleophile role is filled by Ser48. Catalysis depends on Asp178, which acts as the Proton acceptor. The short motif at 178–180 is the DGA/G element; it reads DGG.

The protein belongs to the patatin family.

The catalysed reaction is a 1,2-diacyl-sn-glycero-3-phosphocholine + H2O = a 2-acyl-sn-glycero-3-phosphocholine + a fatty acid + H(+). It catalyses the reaction 1,2-di-(9Z-octadecenoyl)-sn-glycero-3-phosphoethanolamine + 2 H2O = sn-glycero-3-phosphoethanolamine + 2 (9Z)-octadecenoate + 2 H(+). Phospholipase activity is specifically activated upon cGAMP binding, which is produced by the cognate cyclic nucleotide synthase encoded in the same operon. Is not activated by cyclic dinucleotides 2',3'-cGAMP, c-diAMP or 3',3'-c-diGMP. In terms of biological role, effector phospholipase of a CBASS antiviral system. CBASS (cyclic oligonucleotide-based antiphage signaling system) provides immunity against bacteriophages. The CD-NTase protein (CdnA) synthesizes cyclic nucleotides in response to infection; these serve as specific second messenger signals. The signals activate a diverse range of effectors, leading to bacterial cell death and thus abortive phage infection. A type II-A(GA) CBASS system. Its function is as follows. Phospholipase that is activated upon binding to the cyclic dinucleotide (CDN) second messenger 3',3'-cyclic GMP-AMP (cGAMP). Degrades phospholipids in the cell membrane. Functionally, the capV-cdnA-cap2-cap3 operon provides about 10(4)-fold protection in strain BWHPSA011 against infection by phage PaMx41. In P.aeruginosa strain PAO1 it confers protection against phages PaMx41 and JBD18 but not JBD67 (JBD18 and JBD67 do not replicate in BWHPSA011 / Pa011). When acb2 in JBD67 is deleted this CBASS operon then protects against JDB67 also. This CBASS system limits prophage induction of lysogenized JBD67 as well as viral lytic replication. In Pseudomonas aeruginosa (strain BWHPSA011 / Pa011), this protein is cGAMP-activated phospholipase.